The following is a 134-amino-acid chain: Small ribosomal subunit protein uS11 (134 aa).

The protein belongs to the universal ribosomal protein uS11 family. Part of the 30S ribosomal subunit. Interacts with proteins S7 and S18. Binds to IF-3.

In terms of biological role, located on the platform of the 30S subunit, it bridges several disparate RNA helices of the 16S rRNA. Forms part of the Shine-Dalgarno cleft in the 70S ribosome. In Frankia alni (strain DSM 45986 / CECT 9034 / ACN14a), this protein is Small ribosomal subunit protein uS11.